The primary structure comprises 559 residues: Dihydroxy-acid dehydratase (559 aa).

Cys52 contacts [2Fe-2S] cluster. Asp84 provides a ligand contact to Mg(2+). Position 125 (Cys125) interacts with [2Fe-2S] cluster. Residues Asp126 and Lys127 each coordinate Mg(2+). Position 127 is an N6-carboxylysine (Lys127). Cys197 contacts [2Fe-2S] cluster. Glu447 serves as a coordination point for Mg(2+). The Proton acceptor role is filled by Ser473.

The protein belongs to the IlvD/Edd family. As to quaternary structure, homodimer. The cofactor is [2Fe-2S] cluster. It depends on Mg(2+) as a cofactor.

The enzyme catalyses (2R)-2,3-dihydroxy-3-methylbutanoate = 3-methyl-2-oxobutanoate + H2O. It carries out the reaction (2R,3R)-2,3-dihydroxy-3-methylpentanoate = (S)-3-methyl-2-oxopentanoate + H2O. It participates in amino-acid biosynthesis; L-isoleucine biosynthesis; L-isoleucine from 2-oxobutanoate: step 3/4. It functions in the pathway amino-acid biosynthesis; L-valine biosynthesis; L-valine from pyruvate: step 3/4. Functionally, functions in the biosynthesis of branched-chain amino acids. Catalyzes the dehydration of (2R,3R)-2,3-dihydroxy-3-methylpentanoate (2,3-dihydroxy-3-methylvalerate) into 2-oxo-3-methylpentanoate (2-oxo-3-methylvalerate) and of (2R)-2,3-dihydroxy-3-methylbutanoate (2,3-dihydroxyisovalerate) into 2-oxo-3-methylbutanoate (2-oxoisovalerate), the penultimate precursor to L-isoleucine and L-valine, respectively. The protein is Dihydroxy-acid dehydratase of Roseiflexus castenholzii (strain DSM 13941 / HLO8).